The following is a 935-amino-acid chain: Progesterone receptor (935 aa).

Positions M1–S49 are disordered. An AF3; mediates transcriptional activation region spans residues M1–L164. The segment at M1–I568 is modulating, Pro-Rich. The residue at position 20 (S20) is a Phosphoserine. Positions A32 to T44 are enriched in polar residues. An LXXL motif 1 motif is present at residues L55–L59. Positions R62–Q158 are disordered. Residue S81 is modified to Phosphoserine. The short motif at L115–W119 is the LXXL motif 2 element. Phosphoserine occurs at positions 130 and 162. Residues M165–H305 form a mediates transcriptional transrepression region. A Nuclear localization signal motif is present at residues K183–R187. The disordered stretch occupies residues R187–A233. Phosphoserine is present on S190. Over residues P191–P203 the composition is skewed to polar residues. S213 carries the phosphoserine modification. Residues E220–D231 are compositionally biased toward acidic residues. Phosphoserine; by MAPK1 is present on S294. The interval S328–P365 is disordered. Positions A335–S356 are enriched in low complexity. S345 bears the Phosphoserine; by MAPK mark. K388 participates in a covalent cross-link: Glycyl lysine isopeptide (Lys-Gly) (interchain with G-Cter in SUMO); alternate. K388 participates in a covalent cross-link: Glycyl lysine isopeptide (Lys-Gly) (interchain with G-Cter in ubiquitin); alternate. Positions E390–S452 are disordered. The residue at position 400 (S400) is a Phosphoserine; by CDK2. The segment covering P418 to R433 has biased composition (pro residues). The segment covering P434 to S452 has biased composition (low complexity). The interval S456 to R548 is AF1; mediates transcriptional activation. Residue K533 forms a Glycyl lysine isopeptide (Lys-Gly) (interchain with G-Cter in SUMO) linkage. 2 NR C4-type zinc fingers span residues C569–C589 and C605–C629. Residues C569–F641 constitute a DNA-binding region (nuclear receptor). A Phosphoserine modification is found at S678. Residues Q681–I915 enclose the NR LBD domain. The tract at residues L689–K935 is AF2; mediates transcriptional activation. R768 contributes to the progesterone binding site.

The protein belongs to the nuclear hormone receptor family. Interacts with SMARD1 and UNC45A. Interacts with CUEDC2; the interaction promotes ubiquitination, decreases sumoylation, and represses transcriptional activity. Interacts with PIAS3; the interaction promotes sumoylation of PR in a hormone-dependent manner, inhibits DNA-binding, and alters nuclear export. Interacts with SP1; the interaction requires ligand-induced phosphorylation on Ser-345 by ERK1/2-MAPK. Interacts with PRMT2. Interacts with NCOA2 and NCOA1. Interacts with KLF9. Interacts with GTF2B. In terms of processing, phosphorylated on multiple serine sites. Several of these sites are hormone-dependent. Phosphorylation on Ser-294 is highly hormone-dependent and modulates ubiquitination and sumoylation on Lys-388. Phosphorylation on Ser-345 also requires induction by hormone. Basal phosphorylation on Ser-81, Ser-162, Ser-190 and Ser-400 is increased in response to progesterone and can be phosphorylated in vitro by the CDK2-A1 complex. Increased levels of phosphorylation on Ser-400 also in the presence of EGF, heregulin, IGF, PMA and FBS. Phosphorylation at this site by CDK2 is ligand-independent, and increases nuclear translocation and transcriptional activity. Phosphorylation at Ser-162 and Ser-294, but not at Ser-190, is impaired during the G(2)/M phase of the cell cycle. Phosphorylation on Ser-345 by ERK1/2 MAPK is required for interaction with SP1. Post-translationally, sumoylation is hormone-dependent and represses transcriptional activity. Sumoylation on all three sites is enhanced by PIAS3. Desumoylated by SENP1. Sumoylation on Lys-388, the main site of sumoylation, is repressed by ubiquitination on the same site, and modulated by phosphorylation at Ser-294. Ubiquitination is hormone-dependent and represses sumoylation on the same site. Promoted by MAPK-mediated phosphorylation on Ser-294. Ubiquitinated by UBR5, leading to its degradation: UBR5 specifically recognizes and binds ligand-bound PGR when it is not associated with coactivators (NCOAs). In presence of NCOAs, the UBR5-degron is not accessible, preventing its ubiquitination and degradation. In terms of processing, palmitoylated by ZDHHC7 and ZDHHC21. Palmitoylation is required for plasma membrane targeting and for rapid intracellular signaling via ERK and AKT kinases and cAMP generation.

The protein resides in the nucleus. Its subcellular location is the cytoplasm. Its function is as follows. The steroid hormones and their receptors are involved in the regulation of eukaryotic gene expression and affect cellular proliferation and differentiation in target tissues. Transcriptional activator of several progesteron-dependent promoters in a variety of cell types. Involved in activation of SRC-dependent MAPK signaling on hormone stimulation. The polypeptide is Progesterone receptor (PGR) (Sapajus apella (Brown-capped capuchin)).